A 587-amino-acid polypeptide reads, in one-letter code: tRNA (guanine(37)-N(1))-methyltransferase 2 (587 aa).

S-adenosyl-L-methionine-binding positions include Arg-360 and 430–431 (DA). Positions 446–469 (ASTRSRKEDVTNKDGNHVTPTEPM) are disordered. The span at 450 to 461 (SRKEDVTNKDGN) shows a compositional bias: basic and acidic residues. Asn-478 serves as a coordination point for S-adenosyl-L-methionine.

Belongs to the class I-like SAM-binding methyltransferase superfamily. TRM5/TYW2 family. Monomer.

The protein localises to the mitochondrion matrix. The protein resides in the nucleus. It localises to the cytoplasm. It carries out the reaction guanosine(37) in tRNA + S-adenosyl-L-methionine = N(1)-methylguanosine(37) in tRNA + S-adenosyl-L-homocysteine + H(+). Functionally, specifically methylates the N1 position of guanosine-37 in various cytoplasmic and mitochondrial tRNAs. Methylation is not dependent on the nature of the nucleoside 5' of the target nucleoside. This is the first step in the biosynthesis of wybutosine (yW), a modified base adjacent to the anticodon of tRNAs and required for accurate decoding. In Phaeodactylum tricornutum (strain CCAP 1055/1), this protein is tRNA (guanine(37)-N(1))-methyltransferase 2.